The sequence spans 231 residues: Flagellar L-ring protein 2 (231 aa).

The first 15 residues, 1–15, serve as a signal peptide directing secretion; it reads MKNLILILPLLMLTG. Cys-16 carries N-palmitoyl cysteine lipidation. The S-diacylglycerol cysteine moiety is linked to residue Cys-16. Residues 30–54 are disordered; sequence SPVGSGLRTQADPIPVTPRMRTPVS.

Belongs to the FlgH family. The basal body constitutes a major portion of the flagellar organelle and consists of four rings (L,P,S, and M) mounted on a central rod.

The protein localises to the cell outer membrane. Its subcellular location is the bacterial flagellum basal body. Assembles around the rod to form the L-ring and probably protects the motor/basal body from shearing forces during rotation. In Bradyrhizobium diazoefficiens (strain JCM 10833 / BCRC 13528 / IAM 13628 / NBRC 14792 / USDA 110), this protein is Flagellar L-ring protein 2.